Consider the following 156-residue polypeptide: Small ribosomal subunit protein uS7 (156 aa).

Belongs to the universal ribosomal protein uS7 family. As to quaternary structure, part of the 30S ribosomal subunit. Contacts proteins S9 and S11.

Its function is as follows. One of the primary rRNA binding proteins, it binds directly to 16S rRNA where it nucleates assembly of the head domain of the 30S subunit. Is located at the subunit interface close to the decoding center, probably blocks exit of the E-site tRNA. The protein is Small ribosomal subunit protein uS7 of Mycoplasmopsis pulmonis (strain UAB CTIP) (Mycoplasma pulmonis).